Reading from the N-terminus, the 169-residue chain is MSKKIAVLVTDQFEDIEYTSPVKAYEEAGYSVVAIDLEAGKEVTGKHGEKVKIDKAISDVDASDFDALLIPGGFSPDLLRADDRPGEFAKAFVENKKPVFAICHGPQVLIDTDLLKGKDITGYRSIRKDLINAGANYKDAEVVVSHNIVTSRTPDDLEAFNRESLNLLK.

The PfpI endopeptidase domain maps to 3-169 (KKIAVLVTDQ…FNRESLNLLK (167 aa)). Cys-103 acts as the Nucleophile in catalysis. His-104 is an active-site residue.

Belongs to the peptidase C56 family.

In terms of biological role, functions in the protection against aldehyde-stress, possibly by degrading damaged proteins. The polypeptide is Putative cysteine protease YraA (yraA) (Bacillus subtilis (strain 168)).